The following is a 226-amino-acid chain: MNENLFSSFITPTLMGLPIIILIIMFPPVIMTSSKRLVNNRFHTFQQWLIKLITKQMMAIHSPKGRTWSLMLASLIIFIGSTNLLGLLPHTFTPTTQLSMNLGMAIPPWAGAVILGFRHKMKDSLAHFLPQGTPIPLIPMLVIIETISLFIQPMALAVRLTANITAGHLLMHLIGGATLVLTSISLPTAMITFIILIMLTILEFAVALIQAYVFTLLVSLYLHDNT.

6 helical membrane-spanning segments follow: residues 10-30 (ITPTLMGLPIIILIIMFPPVI), 68-88 (WSLMLASLIIFIGSTNLLGLL), 97-117 (QLSMNLGMAIPPWAGAVILGF), 138-158 (IPMLVIIETISLFIQPMALAV), 164-184 (ITAGHLLMHLIGGATLVLTSI), and 189-209 (AMITFIILIMLTILEFAVALI).

It belongs to the ATPase A chain family. In terms of assembly, component of the ATP synthase complex composed at least of ATP5F1A/subunit alpha, ATP5F1B/subunit beta, ATP5MC1/subunit c (homooctomer), MT-ATP6/subunit a, MT-ATP8/subunit 8, ATP5ME/subunit e, ATP5MF/subunit f, ATP5MG/subunit g, ATP5MK/subunit k, ATP5MJ/subunit j, ATP5F1C/subunit gamma, ATP5F1D/subunit delta, ATP5F1E/subunit epsilon, ATP5PF/subunit F6, ATP5PB/subunit b, ATP5PD/subunit d, ATP5PO/subunit OSCP. ATP synthase complex consists of a soluble F(1) head domain (subunits alpha(3) and beta(3)) - the catalytic core - and a membrane F(0) domain - the membrane proton channel (subunits c, a, 8, e, f, g, k and j). These two domains are linked by a central stalk (subunits gamma, delta, and epsilon) rotating inside the F1 region and a stationary peripheral stalk (subunits F6, b, d, and OSCP). Interacts with DNAJC30; interaction is direct.

It is found in the mitochondrion inner membrane. It catalyses the reaction H(+)(in) = H(+)(out). Its function is as follows. Subunit a, of the mitochondrial membrane ATP synthase complex (F(1)F(0) ATP synthase or Complex V) that produces ATP from ADP in the presence of a proton gradient across the membrane which is generated by electron transport complexes of the respiratory chain. ATP synthase complex consist of a soluble F(1) head domain - the catalytic core - and a membrane F(1) domain - the membrane proton channel. These two domains are linked by a central stalk rotating inside the F(1) region and a stationary peripheral stalk. During catalysis, ATP synthesis in the catalytic domain of F(1) is coupled via a rotary mechanism of the central stalk subunits to proton translocation. With the subunit c (ATP5MC1), forms the proton-conducting channel in the F(0) domain, that contains two crucial half-channels (inlet and outlet) that facilitate proton movement from the mitochondrial intermembrane space (IMS) into the matrix. Protons are taken up via the inlet half-channel and released through the outlet half-channel, following a Grotthuss mechanism. The sequence is that of ATP synthase F(0) complex subunit a from Cricetulus griseus (Chinese hamster).